The sequence spans 256 residues: DNA repair protein RecO (256 aa).

This sequence belongs to the RecO family.

Involved in DNA repair and RecF pathway recombination. In Desulforamulus reducens (strain ATCC BAA-1160 / DSM 100696 / MI-1) (Desulfotomaculum reducens), this protein is DNA repair protein RecO.